Consider the following 296-residue polypeptide: 4-hydroxy-tetrahydrodipicolinate synthase (296 aa).

T49 contacts pyruvate. Y137 serves as the catalytic Proton donor/acceptor. The active-site Schiff-base intermediate with substrate is the K165. I207 is a pyruvate binding site.

It belongs to the DapA family. Homotetramer; dimer of dimers.

Its subcellular location is the cytoplasm. It catalyses the reaction L-aspartate 4-semialdehyde + pyruvate = (2S,4S)-4-hydroxy-2,3,4,5-tetrahydrodipicolinate + H2O + H(+). The protein operates within amino-acid biosynthesis; L-lysine biosynthesis via DAP pathway; (S)-tetrahydrodipicolinate from L-aspartate: step 3/4. Catalyzes the condensation of (S)-aspartate-beta-semialdehyde [(S)-ASA] and pyruvate to 4-hydroxy-tetrahydrodipicolinate (HTPA). The protein is 4-hydroxy-tetrahydrodipicolinate synthase of Bradyrhizobium diazoefficiens (strain JCM 10833 / BCRC 13528 / IAM 13628 / NBRC 14792 / USDA 110).